The primary structure comprises 675 residues: Mitochondrial distribution and morphology protein 12 (675 aa).

Positions 1–675 (MSIDLNWDTV…VYPSFWTFLV (675 aa)) constitute an SMP-LTD domain. Disordered stretches follow at residues 66–186 (LPDF…GTNH), 241–270 (GPSW…GAGG), 307–327 (GTGK…PLGT), 365–390 (TGPR…VAPA), and 444–517 (PKQG…RFRE). Over residues 78–101 (SSEESDSEEEVAYENEGEYLDDPV) the composition is skewed to acidic residues. Over residues 123 to 137 (NSSTGSRNGSGPNSG) the composition is skewed to low complexity. Residues 261 to 270 (GGAGGGGAGG) are compositionally biased toward gly residues. A compositionally biased stretch (low complexity) spans 317–327 (PLTGTSTPLGT). 2 stretches are compositionally biased toward polar residues: residues 373–382 (PSSQSLNSVG) and 454–469 (VSTL…NNRA). A compositionally biased stretch (acidic residues) spans 497-510 (EPEEDEEEEEEGEE).

Belongs to the MDM12 family. Component of the ER-mitochondria encounter structure (ERMES) or MDM complex, composed of mmm-1, mdm10, mdm12 and mdm34. A mmm-1 homodimer associates with one molecule of mdm12 on each side in a pairwise head-to-tail manner, and the SMP-LTD domains of mmm-1 and mdm12 generate a continuous hydrophobic tunnel for phospholipid trafficking.

It is found in the mitochondrion outer membrane. Its subcellular location is the endoplasmic reticulum membrane. Functionally, component of the ERMES/MDM complex, which serves as a molecular tether to connect the endoplasmic reticulum (ER) and mitochondria. Components of this complex are involved in the control of mitochondrial shape and protein biogenesis, and function in nonvesicular lipid trafficking between the ER and mitochondria. Mdm12 is required for the interaction of the ER-resident membrane protein MMM1 and the outer mitochondrial membrane-resident beta-barrel protein mdm10. The mdm12-mmm-1 subcomplex functions in the major beta-barrel assembly pathway that is responsible for biogenesis of all mitochondrial outer membrane beta-barrel proteins, and acts in a late step after the SAM complex. The mdm10-mdm12-mmm-1 subcomplex further acts in the TOM40-specific pathway after the action of the mdm12-mmm1 complex. Essential for establishing and maintaining the structure of mitochondria and maintenance of mtDNA nucleoids. The chain is Mitochondrial distribution and morphology protein 12 from Neurospora crassa (strain ATCC 24698 / 74-OR23-1A / CBS 708.71 / DSM 1257 / FGSC 987).